Consider the following 352-residue polypeptide: Quinolinate synthase (352 aa).

Residues His48 and Ser69 each coordinate iminosuccinate. A [4Fe-4S] cluster-binding site is contributed by Cys114. Residues 140 to 142 and Ser157 contribute to the iminosuccinate site; that span reads YAN. Cys201 serves as a coordination point for [4Fe-4S] cluster. Iminosuccinate is bound by residues 227–229 and Thr244; that span reads HPE. Cys298 is a [4Fe-4S] cluster binding site.

It belongs to the quinolinate synthase family. Type 1 subfamily. [4Fe-4S] cluster serves as cofactor.

It localises to the cytoplasm. It catalyses the reaction iminosuccinate + dihydroxyacetone phosphate = quinolinate + phosphate + 2 H2O + H(+). Its pathway is cofactor biosynthesis; NAD(+) biosynthesis; quinolinate from iminoaspartate: step 1/1. Functionally, catalyzes the condensation of iminoaspartate with dihydroxyacetone phosphate to form quinolinate. The polypeptide is Quinolinate synthase (Pseudomonas entomophila (strain L48)).